The primary structure comprises 257 residues: uncharacterized protein (257 aa).

Residue 7-14 (GKGGVGKT) participates in ATP binding.

The protein to M.jannaschii MJ0084 and MJ0685.

This is an uncharacterized protein from Methanocaldococcus jannaschii (strain ATCC 43067 / DSM 2661 / JAL-1 / JCM 10045 / NBRC 100440) (Methanococcus jannaschii).